The chain runs to 101 residues: Urease subunit beta (101 aa).

This sequence belongs to the urease beta subunit family. In terms of assembly, heterotrimer of UreA (gamma), UreB (beta) and UreC (alpha) subunits. Three heterotrimers associate to form the active enzyme.

The protein localises to the cytoplasm. The catalysed reaction is urea + 2 H2O + H(+) = hydrogencarbonate + 2 NH4(+). Its pathway is nitrogen metabolism; urea degradation; CO(2) and NH(3) from urea (urease route): step 1/1. The polypeptide is Urease subunit beta (Bradyrhizobium sp. (strain ORS 278)).